The following is a 171-amino-acid chain: Anthrone oxygenase dmxR16 (171 aa).

A run of 3 helical transmembrane segments spans residues Val21–Ile41, Gly67–Leu87, and Tyr96–Pro116. N-linked (GlcNAc...) asparagine glycosylation is found at Asn118 and Asn129. Residues Trp145–Ile165 traverse the membrane as a helical segment.

The protein belongs to the anthrone oxygenase family.

It localises to the membrane. It catalyses the reaction emodin anthrone + O2 = emodin + H2O + H(+). It functions in the pathway secondary metabolite biosynthesis. Functionally, anthrone oxygenase; part of the gene cluster that mediates the biosynthesis of the dimeric xanthones cryptosporioptides. The pathway begins with the synthesis of atrochrysone thioester by the polyketide synthase dmx-nrPKS. The atrochrysone carboxyl ACP thioesterase dmxR1 then breaks the thioester bond and releases the atrochrysone carboxylic acid from dmx-nrPKS. Atrochrysone carboxylic acid is decarboxylated by the decarboxylase dmxR15, and oxidized by the anthrone oxygenase dmxR16 to yield emodin. Emodin is then reduced to emodin hydroquinone by the oxidoreductase dmxR7. A-ring reduction by the short chain dehydrogenase dmxR18, dehydration by the scytalone dehydratase-like protein dmxR17 and probable spontaneous re-oxidation, results in overall deoxygenation to chrysophanol. Baeyer-Villiger oxidation by the Baeyer-Villiger monooxygenase (BVMO) dmxR6 then yields monodictylactone in equilibrium with monodictyphenone. In the case of the cryptosporioptides biosynthesis, monodictylactone is reduced at C-12 to an alcohol (by the short chain dehydrogenases dmxR12 or dmxR8) and hydroxylated at C-5 by dmxR9, yielding the electron-rich aromatic which could eliminate H(2)O to form the ortho-quinonemethide, followed by tautomerisation to paraquinone and complete the formal reduction to produce the 10-methylgroup. Conjugate addition of C-4a-OH to the resulting paraquinone by the monooxygenase dmxR10 then gives cyclohexadienone, which is then reduced at C-5 by the short chain dehydrogenase dmxR3 to give the dihydroxanthone. The 6,7-epoxide in the cryptosporioptides could be introduced by the cytochrome P450 monooxygenase dmxL3. The highly reducing PKS dmxL2 manufactures butyrate, which is further carboxylated by dmxL1 to form ethylmalonate. It is not yet clear whether the carboxylation occurs while the butyrate is attached to the ACP of dmxL2, but this unusual fungal metabolite could then be esterified to O-5 by the O-acetyltransferase dmxR13. Finally, dimerization performed by dmxR5 gives the observed dimers cryptosporioptides A, B and C as the final products of the pathway. The chain is Anthrone oxygenase dmxR16 from Cryptosporiopsis sp. (strain 8999).